We begin with the raw amino-acid sequence, 237 residues long: uncharacterized protein (237 aa).

The helical transmembrane segment at 53-70 (LIFLATVLAGLILFYFGV) threads the bilayer. Residues 85 to 155 (PPIVIKPVAP…TQEKKDVKVA (71 aa)) form a disordered region. Positions 98 to 157 (KTQESNQTTKKEVKQEEQKKEEPKKMVQKQETQEKREVKKSEKNEVKQTQEKKDVKVAKK) form a coiled coil. Composition is skewed to basic and acidic residues over residues 106–122 (TKKE…EPKK) and 128–155 (ETQE…VKVA). The SPOR domain occupies 165–237 (AANLRTYKFQ…HFKDAIFVRK (73 aa)).

It is found in the membrane. This is an uncharacterized protein from Aquifex aeolicus (strain VF5).